The primary structure comprises 150 residues: Large ribosomal subunit protein bL9 (150 aa).

It belongs to the bacterial ribosomal protein bL9 family.

Its function is as follows. Binds to the 23S rRNA. The sequence is that of Large ribosomal subunit protein bL9 from Lactococcus lactis subsp. cremoris (strain SK11).